Consider the following 199-residue polypeptide: 3-isopropylmalate dehydratase small subunit (199 aa).

Belongs to the LeuD family. LeuD type 1 subfamily. In terms of assembly, heterodimer of LeuC and LeuD.

The catalysed reaction is (2R,3S)-3-isopropylmalate = (2S)-2-isopropylmalate. It functions in the pathway amino-acid biosynthesis; L-leucine biosynthesis; L-leucine from 3-methyl-2-oxobutanoate: step 2/4. Functionally, catalyzes the isomerization between 2-isopropylmalate and 3-isopropylmalate, via the formation of 2-isopropylmaleate. The sequence is that of 3-isopropylmalate dehydratase small subunit from Aeromonas salmonicida (strain A449).